The sequence spans 212 residues: Inactive ribonuclease-like protein 10 (212 aa).

The signal sequence occupies residues 1–24 (MKLTLVQIFFMMLLLLLGLGVGLG).

The protein belongs to the pancreatic ribonuclease family. In terms of processing, the N-terminus is blocked. Glycosylated. In terms of tissue distribution, male-specific expression in proximal caput of the epididymis.

It localises to the secreted. Functionally, secreted proximal epididymal protein required for post-testicular sperm maturation and male fertility. May be involved in sperm adhesion to the egg zona pellucida. Does not have ribonuclease activity. The polypeptide is Inactive ribonuclease-like protein 10 (RNASE10) (Ovis aries (Sheep)).